We begin with the raw amino-acid sequence, 390 residues long: Immunoglobulin mu Fc receptor (390 aa).

The signal sequence occupies residues 1 to 16 (MDFWLWPLYFLPVSGA). Residues 17–251 (LRILPEVKVE…GSQSGREGQG (235 aa)) are Extracellular-facing. The region spanning 23–123 (VKVEGELGGS…KTQKVTLNVH (101 aa)) is the Ig-like domain. Residues 33–115 (VTIKCPLPEM…AGMNTDRGKT (83 aa)) form a CDR4 region. 2 cysteine pairs are disulfide-bonded: cysteine 37–cysteine 104 and cysteine 49–cysteine 58. The CDR1 stretch occupies residues 40 to 45 (PEMHVR). Positions 59–70 (GTVVSTTNFIKA) are CDR2. At threonine 92 the chain carries Phosphothreonine. The interval 106-115 (AGMNTDRGKT) is CDR3. The interval 166–204 (PAQRGKVPPVHHSSPTTQITHRPRVSRASSVAGDKPRTF) is disordered. Residues 252–272 (FHILIPTILGLFLLALLGLVV) form a helical membrane-spanning segment. The Cytoplasmic segment spans residues 273–390 (KRAVERRKAL…DSDDYINVPA (118 aa)). Composition is skewed to low complexity over residues 293-311 (MRAL…PRSQ) and 325-334 (ADAAGTGEAP). The segment at 293-348 (MRALESSQRPRGSPRPRSQNNIYSACPRRARGADAAGTGEAPVPGPGAPLPPAPLQ) is disordered. Residues 335 to 346 (VPGPGAPLPPAP) are compositionally biased toward pro residues.

In terms of assembly, interacts (via Ig-like domain) with IGHM (via CH4/Cmu4 domain), both secreted and membrane-bound IgM; the interaction is glycan-independent and multivalent theoretically involving up to eight binding sites for the IgM pentamer. In terms of processing, phosphorylated on both Tyr and Ser residues. Post-translationally, O-glycosylated. Sialylated. O-linked glycans regulate trafficking to the plasma membrane. In terms of tissue distribution, expressed by CD19-positive B cells and CD4-positive and CD8-positive T cell populations in primary and secondary lymphoid tissues (at protein level). Among B cell subsets, detected in a subset of bone marrow pro- and pre-B cells, in most follicular and memory B cells and in a small subset of germinal center B cells (at protein level). Expressed at lower levels in CD56-positive NK cells (at protein level). Expressed in lymph nodes, lung, thymus and kidneys. Very weak expression detected in spleen, liver, heart, and salivary gland.

The protein localises to the cell membrane. The protein resides in the early endosome membrane. It is found in the golgi apparatus. It localises to the trans-Golgi network membrane. Its subcellular location is the lysosome membrane. The protein localises to the secreted. High-affinity Fc receptor for immunoglobulin M (IgM), both secreted and membrane-bound IgM. Primarily regulates IgM transport and homeostasis. In lymphoid cells, enables exocytosis of membrane-bound IgM on the plasma membrane as well as endocytosis of IgM-antigen complexes toward lysosomes for degradation. In mucosal epithelium, mediates retrotranscytosis of antigen-IgM complexes across mucosal M cells toward antigen-presenting cells in mucosal lymphoid tissues. Triggers costimulatory signaling and mediates most of IgM effector functions involved in B cell development and primary immune response to infection. Likely limits tonic IgM BCR signaling to self-antigens for proper negative selection of autoreactive B cells in the bone marrow and for the maintenance of regulatory B cell pool in peripheral lymphoid organs. Mediates antibody responses to T cell-dependent and T cell-independent antigens and promotes induction of an efficient neutralizing IgG response. Engages in cross-talk with antigen-receptor signaling via the non-canonical NF-kappa-B, MAP kinases and calcium signaling pathways. In Homo sapiens (Human), this protein is Immunoglobulin mu Fc receptor.